We begin with the raw amino-acid sequence, 71 residues long: MPGLVNAPNHVPEKQRYYQQAFKNHTRLWKIGPRSGIIMTTFNIAMWGTFGASMYAMSRKVLGYNTWFSED.

At 1-35 (MPGLVNAPNHVPEKQRYYQQAFKNHTRLWKIGPRS) the chain is on the mitochondrial matrix side. Residues 36–58 (GIIMTTFNIAMWGTFGASMYAMS) form a helical membrane-spanning segment. Residues 59–71 (RKVLGYNTWFSED) lie on the Mitochondrial intermembrane side of the membrane.

It belongs to the cytochrome c oxidase VIIa family. In terms of assembly, component of the cytochrome c oxidase (complex IV, CIV), a multisubunit enzyme composed of 11 subunits. The complex is composed of a catalytic core of 3 subunits Cox1, Cox2 and Cox3, encoded in the mitochondrial DNA, and 8 supernumerary subunits Cox4, Cox5a/Cox5, Cox6, Cox7, Cox8, Cox7a/Cox9, Cox6b/Cox12 and Cox6a/Cox13, which are encoded in the nuclear genome. The complex exists as a monomer or a dimer and forms respiratory supercomplexes (SCs) in the inner mitochondrial membrane with NADH-ubiquinone oxidoreductase (complex I, CI) and ubiquinol-cytochrome c oxidoreductase (cytochrome b-c1 complex, complex III, CIII), resulting in various different assemblies (supercomplexes I(1)IV(1), I(1)III(3)IV(2), III(2)IV(1) and III(2)IV(2) as well as larger supercomplexes of compositions like I(1)III(2)IV(5-6)).

The protein localises to the mitochondrion inner membrane. Its pathway is energy metabolism; oxidative phosphorylation. Component of the cytochrome c oxidase, the last enzyme in the mitochondrial electron transport chain which drives oxidative phosphorylation. The respiratory chain contains 3 multisubunit complexes succinate dehydrogenase (complex II, CII), ubiquinol-cytochrome c oxidoreductase (cytochrome b-c1 complex, complex III, CIII) and cytochrome c oxidase (complex IV, CIV), that cooperate to transfer electrons derived from NADH and succinate to molecular oxygen, creating an electrochemical gradient over the inner membrane that drives transmembrane transport and the ATP synthase. Cytochrome c oxidase is the component of the respiratory chain that catalyzes the reduction of oxygen to water. Electrons originating from reduced cytochrome c in the intermembrane space (IMS) are transferred via the dinuclear copper A center (CU(A)) of Cox2 and heme A of Cox1 to the active site in Cox1, a binuclear center (BNC) formed by heme A3 and copper B (CU(B)). The BNC reduces molecular oxygen to 2 water molecules using 4 electrons from cytochrome c in the IMS and 4 protons from the mitochondrial matrix. This Neurospora crassa (strain ATCC 24698 / 74-OR23-1A / CBS 708.71 / DSM 1257 / FGSC 987) protein is Cytochrome c oxidase subunit 7, mitochondrial.